Here is an 87-residue protein sequence, read N- to C-terminus: Small ribosomal subunit protein uS15 (87 aa).

The protein belongs to the universal ribosomal protein uS15 family. As to quaternary structure, part of the 30S ribosomal subunit. Forms a bridge to the 50S subunit in the 70S ribosome, contacting the 23S rRNA.

In terms of biological role, one of the primary rRNA binding proteins, it binds directly to 16S rRNA where it helps nucleate assembly of the platform of the 30S subunit by binding and bridging several RNA helices of the 16S rRNA. Forms an intersubunit bridge (bridge B4) with the 23S rRNA of the 50S subunit in the ribosome. This Ruminiclostridium cellulolyticum (strain ATCC 35319 / DSM 5812 / JCM 6584 / H10) (Clostridium cellulolyticum) protein is Small ribosomal subunit protein uS15.